A 407-amino-acid polypeptide reads, in one-letter code: Peptidase T (407 aa).

His77 contributes to the Zn(2+) binding site. Asp79 is an active-site residue. Asp140 contacts Zn(2+). Glu174 serves as the catalytic Proton acceptor. Residues Glu175, Asp197, and His379 each coordinate Zn(2+).

Belongs to the peptidase M20B family. Zn(2+) is required as a cofactor.

Its subcellular location is the cytoplasm. The enzyme catalyses Release of the N-terminal residue from a tripeptide.. Cleaves the N-terminal amino acid of tripeptides. This chain is Peptidase T, found in Bacteroides fragilis (strain YCH46).